The following is a 318-amino-acid chain: HTH-type transcriptional regulatory protein TyrR (318 aa).

The Sigma-54 factor interaction; truncated domain maps to 15-239 (FIVQSEAMKS…LYNTLYRACS (225 aa)). Residues 43 to 50 (GETGSGKD) and 101 to 110 (ANKGTVLLDG) contribute to the ATP site. The segment at residues 292 to 312 (STRKLAQRLGVSHTAIANKLK) is a DNA-binding region (H-T-H motif).

In terms of assembly, homodimer. In presence of tyrosine (or high concentrations of phenylalanine or tryptophan) and ATP, it self-associates to form a hexamer.

It localises to the cytoplasm. The DNA binding ability is drastically reduced in the presence of ATP. Tyrosine further reduces the binding affinity of TyrR in the presence of ATP. Functionally, transcriptional regulator of the TyrR regulon, which includes a number of genes coding for proteins involved in the biosynthesis or transport of the three aromatic amino acids, phenylalanine, tyrosine and tryptophan. These three aromatic amino acids act as effectors which bind to the TyrR protein to form an active regulatory protein. Acts by binding specifically to TyrR boxes in the promoter region of the target genes. Can efficiently repress the transcription of the aroF promoter, but lacks the ability to function as a transcriptional activator. In Haemophilus influenzae (strain ATCC 51907 / DSM 11121 / KW20 / Rd), this protein is HTH-type transcriptional regulatory protein TyrR.